Consider the following 466-residue polypeptide: Ribulose bisphosphate carboxylase large chain (466 aa).

Residue Lys5 is modified to N6,N6,N6-trimethyllysine. The substrate site is built by Asn114 and Thr164. The active-site Proton acceptor is the Lys166. Lys168 is a substrate binding site. Mg(2+)-binding residues include Lys192, Asp194, and Glu195. At Lys192 the chain carries N6-carboxylysine. Residue His285 is the Proton acceptor of the active site. The substrate site is built by Arg286, His318, and Ser370.

This sequence belongs to the RuBisCO large chain family. Type I subfamily. Heterohexadecamer of 8 large chains and 8 small chains; disulfide-linked. The disulfide link is formed within the large subunit homodimers. Requires Mg(2+) as cofactor. Post-translationally, the disulfide bond which can form in the large chain dimeric partners within the hexadecamer appears to be associated with oxidative stress and protein turnover.

The protein localises to the plastid. It localises to the chloroplast. It carries out the reaction 2 (2R)-3-phosphoglycerate + 2 H(+) = D-ribulose 1,5-bisphosphate + CO2 + H2O. The enzyme catalyses D-ribulose 1,5-bisphosphate + O2 = 2-phosphoglycolate + (2R)-3-phosphoglycerate + 2 H(+). In terms of biological role, ruBisCO catalyzes two reactions: the carboxylation of D-ribulose 1,5-bisphosphate, the primary event in carbon dioxide fixation, as well as the oxidative fragmentation of the pentose substrate in the photorespiration process. Both reactions occur simultaneously and in competition at the same active site. The sequence is that of Ribulose bisphosphate carboxylase large chain from Drosera filiformis (Thread-leaved sundew).